The chain runs to 270 residues: 4-hydroxy-tetrahydrodipicolinate reductase (270 aa).

Residues G11–M16 and E37 contribute to the NAD(+) site. An NADP(+)-binding site is contributed by R38. Residues G101–T103 and A125–Y128 each bind NAD(+). H158 functions as the Proton donor/acceptor in the catalytic mechanism. (S)-2,3,4,5-tetrahydrodipicolinate is bound at residue H159. The active-site Proton donor is the K162. Residue G168 to T169 coordinates (S)-2,3,4,5-tetrahydrodipicolinate.

This sequence belongs to the DapB family.

It is found in the cytoplasm. It carries out the reaction (S)-2,3,4,5-tetrahydrodipicolinate + NAD(+) + H2O = (2S,4S)-4-hydroxy-2,3,4,5-tetrahydrodipicolinate + NADH + H(+). The enzyme catalyses (S)-2,3,4,5-tetrahydrodipicolinate + NADP(+) + H2O = (2S,4S)-4-hydroxy-2,3,4,5-tetrahydrodipicolinate + NADPH + H(+). It participates in amino-acid biosynthesis; L-lysine biosynthesis via DAP pathway; (S)-tetrahydrodipicolinate from L-aspartate: step 4/4. Catalyzes the conversion of 4-hydroxy-tetrahydrodipicolinate (HTPA) to tetrahydrodipicolinate. This is 4-hydroxy-tetrahydrodipicolinate reductase from Aeromonas salmonicida (strain A449).